A 481-amino-acid polypeptide reads, in one-letter code: MPIINKTMLITYADSLGKNLKELNENIENYFGDAVGGVHLLPFFPSTGDRGFAPIDYHEVDSAFGDWDDVKCLGEKYYLMFDFMINHISRQSKYYKDYQEKHEASAYKDLFLNWDKFWPKNRPTQEDVDLIYKRKDRAPKQEIQFADGSVEHLWNTFGEEQIDLDVTKEVTMDFIRSTIENLAANGCDLIRLDAFAYAVKKLDTNDFFVEPEIWTLLDKVRDIAAVSGAEILPEIHEHYTIQFKIADHDYYVYDFALPMVTLYSLYSSKVDRLAKWLKMSPMKQFTTLDTHDGIGVVDVKDILTDEEITYTSNELYKVGANVNRKYSTAEYNNLDIYQINSTYYSALGDDDQKYFLARLIQAFAPGIPQVYYVGFLAGKNDLELLESTKEGRNINRHYYSSEEIAKEVKRPVVKALLNLFTYRNQSAAFDLDGRIEVETPNEATIVIERQNKDGSHIAKAEINLQDMTYRVTENDQTISFE.

Residues aspartate 49, histidine 87, 191-193, glutamate 234, 291-292, 335-338, and arginine 392 contribute to the sucrose site; these read RLD, HD, and DIYQ. The active-site Nucleophile is the aspartate 193. Residue glutamate 234 is the Proton donor of the active site.

Belongs to the glycosyl hydrolase 13 family. Sucrose phosphorylase subfamily.

The protein resides in the cytoplasm. The enzyme catalyses sucrose + phosphate = D-fructose + alpha-D-glucose 1-phosphate. Intracellular catabolism of sucrose. Being intracellular, probably not involved in synthesis of extracellular polysaccharides. The protein is Sucrose phosphorylase of Streptococcus mutans serotype c (strain ATCC 700610 / UA159).